The primary structure comprises 112 residues: MNKTKSEHIKQQALDLFTRLQFLLQKHDTIEPYQYVLDILETGISKTKHNQQTPERQARVVYNKIASQALVDKLHFTAEENKVLAAINELAHSQKGWGEFNMLDTTNTWPSQ.

Functionally, imparts immunity to pediocin PA-1/ACH to naturally sensitive host strains. The sequence is that of Pediocin PA-1 immunity protein (pedB) from Pediococcus acidilactici.